Here is a 462-residue protein sequence, read N- to C-terminus: Myo-inositol transporter 3B (462 aa).

Helical transmembrane passes span 1–21 (MAILISDVFFTIGAVLIASSY), 31–51 (IILGIGVGGAAVIAPLFITET), 61–81 (IGVNAFFIPFGQVVADAIGAG), 91–111 (LLFALGVVPSVLQLLLFHYLP), 194–214 (LCGFNTLLYYAGTLFGLLGLS), 218–238 (LGGLIPAGTNAVFVLIGMSLV), 245–265 (GLMLFGVPIMLLGLVWNIIGF), 289–309 (VVIGGIVFFVVGYGLTYSHLV), 324–344 (GSGVATTVCWIANLVVSVSYL), and 354–374 (GTYGFYLGLSVIGFAFVVFCF).

The protein belongs to the major facilitator superfamily. Sugar transporter (TC 2.A.1.1) family.

Its subcellular location is the cell membrane. It catalyses the reaction myo-inositol(out) + H(+)(out) = myo-inositol(in) + H(+)(in). Its function is as follows. Transporter for myo-inositol. This Cryptococcus neoformans var. grubii serotype A (strain H99 / ATCC 208821 / CBS 10515 / FGSC 9487) (Filobasidiella neoformans var. grubii) protein is Myo-inositol transporter 3B.